The following is a 72-amino-acid chain: SRY-related protein AES2 (72 aa).

A DNA-binding region (HMG box) is located at residues 1-69 (VKRPMNAFMV…KHMADYPDYK (69 aa)).

The protein localises to the nucleus. This Alligator mississippiensis (American alligator) protein is SRY-related protein AES2.